Reading from the N-terminus, the 100-residue chain is Tetrahydromethanopterin S-methyltransferase subunit B (100 aa).

Residues 80–100 (KLTNIVYGFILGLIILFALLL) form a helical membrane-spanning segment.

It belongs to the MtrB family. As to quaternary structure, the complex is composed of 8 subunits; MtrA, MtrB, MtrC, MtrD, MtrE, MtrF, MtrG and MtrH.

The protein resides in the cell membrane. The enzyme catalyses 5-methyl-5,6,7,8-tetrahydromethanopterin + coenzyme M + 2 Na(+)(in) = 5,6,7,8-tetrahydromethanopterin + methyl-coenzyme M + 2 Na(+)(out). It functions in the pathway one-carbon metabolism; methanogenesis from CO(2); methyl-coenzyme M from 5,10-methylene-5,6,7,8-tetrahydromethanopterin: step 2/2. Part of a complex that catalyzes the formation of methyl-coenzyme M and tetrahydromethanopterin from coenzyme M and methyl-tetrahydromethanopterin. This is an energy-conserving, sodium-ion translocating step. This chain is Tetrahydromethanopterin S-methyltransferase subunit B, found in Methanothermobacter marburgensis (strain ATCC BAA-927 / DSM 2133 / JCM 14651 / NBRC 100331 / OCM 82 / Marburg) (Methanobacterium thermoautotrophicum).